We begin with the raw amino-acid sequence, 1206 residues long: Cilia- and flagella-associated protein 157 (1206 aa).

Disordered regions lie at residues 26–52 (GGGGGSAAAAAMQEEQGEQEGPTGRDL), 79–109 (RAEQEHPQEGRPQQQEQGGEARQEQQGQQAP), 125–173 (EATC…RGPL), and 327–405 (GSGK…EEDW). 3 stretches are compositionally biased toward low complexity: residues 88 to 109 (GRPQQQEQGGEARQEQQGQQAP), 156 to 173 (AKAVARGPRGAGTARGPL), and 385 to 397 (QQLGEQPGEQPGG). Coiled coils occupy residues 634-732 (TDEL…KTKD), 799-833 (TEKLLNKNNKLMEENAELRRQLELSKQTEEELARR), and 876-903 (LHLAQLQLEEKSAEADALRERLESKTAE). 3 disordered regions span residues 936–990 (TTTN…DELS), 1011–1072 (LSHG…GATS), and 1168–1206 (PWGKRSEQQPLTTTKHSGTFLRKGNGPSNNTGSRGSLKV). Composition is skewed to low complexity over residues 951–973 (AGADAAGGSRSGSPTPPGASSSA) and 1014–1035 (GPLSQSSPAPLSAGGMGSALAG). Composition is skewed to gly residues over residues 1037 to 1046 (WGPGSPGGSR) and 1058 to 1067 (SAGGMGGPQG). Polar residues-rich tracts occupy residues 1175–1184 (QQPLTTTKHS) and 1193–1206 (GPSNNTGSRGSLKV).

It belongs to the CFAP157 family.

Its subcellular location is the cell projection. It is found in the cilium. It localises to the flagellum. The protein is Cilia- and flagella-associated protein 157 of Chlamydomonas reinhardtii (Chlamydomonas smithii).